Reading from the N-terminus, the 100-residue chain is Urease subunit gamma (100 aa).

This sequence belongs to the urease gamma subunit family. Heterotrimer of UreA (gamma), UreB (beta) and UreC (alpha) subunits. Three heterotrimers associate to form the active enzyme.

The protein resides in the cytoplasm. It carries out the reaction urea + 2 H2O + H(+) = hydrogencarbonate + 2 NH4(+). It participates in nitrogen metabolism; urea degradation; CO(2) and NH(3) from urea (urease route): step 1/1. In Prochlorococcus marinus (strain MIT 9301), this protein is Urease subunit gamma.